We begin with the raw amino-acid sequence, 450 residues long: Tubulin alpha chain (450 aa).

Gln11 provides a ligand contact to GTP. N6-acetyllysine is present on Lys40. GTP contacts are provided by Glu71, Ser140, Gly144, Thr145, Thr179, Asn206, and Asn228. Residue Glu71 participates in Mg(2+) binding. Glu254 is an active-site residue.

Belongs to the tubulin family. As to quaternary structure, dimer of alpha and beta chains. A typical microtubule is a hollow water-filled tube with an outer diameter of 25 nm and an inner diameter of 15 nM. Alpha-beta heterodimers associate head-to-tail to form protofilaments running lengthwise along the microtubule wall with the beta-tubulin subunit facing the microtubule plus end conferring a structural polarity. Microtubules usually have 13 protofilaments but different protofilament numbers can be found in some organisms and specialized cells. The cofactor is Mg(2+). Post-translationally, acetylation of alpha chains at Lys-40 stabilizes microtubules and affects affinity and processivity of microtubule motors. This modification has a role in multiple cellular functions, ranging from cell motility, cell cycle progression or cell differentiation to intracellular trafficking and signaling.

It localises to the cytoplasm. The protein resides in the cytoskeleton. The enzyme catalyses GTP + H2O = GDP + phosphate + H(+). In terms of biological role, tubulin is the major constituent of microtubules, a cylinder consisting of laterally associated linear protofilaments composed of alpha- and beta-tubulin heterodimers. Microtubules grow by the addition of GTP-tubulin dimers to the microtubule end, where a stabilizing cap forms. Below the cap, tubulin dimers are in GDP-bound state, owing to GTPase activity of alpha-tubulin. The sequence is that of Tubulin alpha chain from Oxytricha granulifera (Ciliate).